The primary structure comprises 465 residues: Cysteine--tRNA ligase (465 aa).

Residue cysteine 27 coordinates Zn(2+). The 'HIGH' region motif lies at 29 to 39; it reads PTVYNFFHIGN. Residues cysteine 207, histidine 232, and glutamate 236 each coordinate Zn(2+). The 'KMSKS' region motif lies at 264–268; the sequence is KMSKS. Position 267 (lysine 267) interacts with ATP.

The protein belongs to the class-I aminoacyl-tRNA synthetase family. As to quaternary structure, monomer. Requires Zn(2+) as cofactor.

The protein localises to the cytoplasm. It carries out the reaction tRNA(Cys) + L-cysteine + ATP = L-cysteinyl-tRNA(Cys) + AMP + diphosphate. The sequence is that of Cysteine--tRNA ligase from Clostridium botulinum (strain Kyoto / Type A2).